Consider the following 44-residue polypeptide: Photosystem I reaction center subunit IX (44 aa).

Residues 9 to 29 (FVRSAPVVAAIWLSLTAGIII) traverse the membrane as a helical segment.

The protein belongs to the PsaJ family.

The protein resides in the cellular thylakoid membrane. Functionally, may help in the organization of the PsaE and PsaF subunits. This chain is Photosystem I reaction center subunit IX, found in Prochlorococcus marinus (strain MIT 9301).